Here is a 269-residue protein sequence, read N- to C-terminus: Phosphonoacetaldehyde hydrolase (269 aa).

Residue Asp-10 is the Nucleophile of the active site. Residues Asp-10 and Ala-12 each coordinate Mg(2+). The Schiff-base intermediate with substrate role is filled by Lys-52. Mg(2+) is bound at residue Asp-186.

It belongs to the HAD-like hydrolase superfamily. PhnX family. In terms of assembly, homodimer. Mg(2+) serves as cofactor.

It carries out the reaction phosphonoacetaldehyde + H2O = acetaldehyde + phosphate + H(+). In terms of biological role, involved in phosphonate degradation. The chain is Phosphonoacetaldehyde hydrolase from Klebsiella pneumoniae subsp. pneumoniae (strain ATCC 700721 / MGH 78578).